A 652-amino-acid chain; its full sequence is Engulfment and cell motility protein 3 (652 aa).

The ELMO domain maps to 307–479; that stretch reads EQREQLQALR…VVREQLARTL (173 aa).

Probably interacts directly with the SH3-domain of DOCK1 via its SH3-binding site. Part of a complex with DOCK1 and RAC1. Interacts with ADGRB3.

The protein resides in the cytoplasm. In terms of biological role, involved in cytoskeletal rearrangements required for phagocytosis of apoptotic cells and cell motility. Acts in association with DOCK1 and CRK. Was initially proposed to be required in complex with DOCK1 to activate Rac Rho small GTPases. May enhance the guanine nucleotide exchange factor (GEF) activity of DOCK1. In Bos taurus (Bovine), this protein is Engulfment and cell motility protein 3 (ELMO3).